A 97-amino-acid chain; its full sequence is Large ribosomal subunit protein bL28 (97 aa).

Belongs to the bacterial ribosomal protein bL28 family.

The protein is Large ribosomal subunit protein bL28 of Brucella abortus (strain S19).